We begin with the raw amino-acid sequence, 876 residues long: Monofunctional isopimaradiene synthase, chloroplastic (876 aa).

Residues Met1–Ile64 constitute a chloroplast transit peptide. Mg(2+) is bound by residues Asp628, Asp632, Asn772, Thr776, and Glu780. Residues Asp628–Asp632 carry the DDXXD motif motif.

This sequence belongs to the terpene synthase family. Tpsd subfamily. Requires Mg(2+) as cofactor.

Its subcellular location is the plastid. The protein localises to the chloroplast. It catalyses the reaction (+)-copalyl diphosphate = isopimara-7,15-diene + diphosphate. Its pathway is terpene metabolism; oleoresin biosynthesis. Involved in defensive oleoresin formation in conifers in response to insect attack or other injury. Involved in diterpene (C20) olefins biosynthesis. Monofunctional enzyme lacking the DXDD motif in the class II active site relevant for the cyclization of geranylgeranyl diphosphate (GGPP). Requires (+)-copalyl diphosphate ((+)-CPP) as substrate, but no activity with GGPP or ent-CPP. Isopimaradiene is the major products of the enzyme followed by sandaracopimaradiene. This Pinus banksiana (Jack pine) protein is Monofunctional isopimaradiene synthase, chloroplastic.